We begin with the raw amino-acid sequence, 609 residues long: Adagio protein 1 (609 aa).

A compositionally biased stretch (low complexity) spans 1–17; the sequence is MEWDSGSDLSADDASSL. The tract at residues 1 to 24 is disordered; the sequence is MEWDSGSDLSADDASSLADDEEGG. In terms of domain architecture, PAS spans 32 to 114; it reads IPYPVGNLLH…SEIRKCIDEG (83 aa). C82 bears the S-4a-FMN cysteine mark. Residues 118–161 form the PAC domain; it reads QGELLNFRKDGSPLMNRLRLTPIYGDDDTITHIIGIQFFIETDI. One can recognise an F-box domain in the interval 195–241; sequence CGLFQLSDEVVSMKILSRLTPRDVASVSSVCRRLYVLTKNEDLWRRV. Kelch repeat units follow at residues 292 to 342, 345 to 392, 397 to 445, 450 to 501, and 516 to 564; these read SRCN…SSPP, RWGH…SGLA, RSWH…PAAW, RLGH…TGSG, and RLDH…NIPG.

This sequence belongs to the ADAGIO family. In terms of assembly, interacts with NFXL2. Interacts (via N-terminus) with GI and (via Kelch repeats) with ADO3. Component of an E3 ubiquitin ligase SCF(ADO1) complex composed of SKP1A/ASK1 (or SKP1B/ASK2), CUL1, RBX1 and ADO1. Also interacts with SKP1D/ASK4, SKP1K/ASK11, CRY1, PHYB, APRR1 and APRR5, and probably with SKP1N/ASK14 and SKP1S/ASK19. Post-translationally, may be ubiquitinated. Degraded in a proteasome-dependent manner. In terms of processing, FMN binds covalently to cysteine after exposure to blue light and is reversed in the dark. In terms of tissue distribution, ubiquitously expressed with higher levels in cotyledons and leaves.

It localises to the nucleus. The protein localises to the cytoplasm. The protein operates within protein modification; protein ubiquitination. Its function is as follows. Component of an E3 ubiquitin ligase complex that plays a central role in blue light-dependent circadian cycles. Acts as a blue light photoreceptor, due to the presence of FMN, that mediates light-regulated protein degradation of critical clock components by targeting them to the proteasome complex. The SCF(ADO1) E3 ubiquitin ligase complex is involved in the regulation of circadian clock-dependent processes including the transition to flowering time, hypocotyl elongation, cotyledons and leaf movement rhythms. APRR1/TOC1 and APRR5, but not 'GIGANTEA', are proteolytic substrates of this ubiquitin ligase complex. Blue light enhances cooperative stabilization of 'GIGANTEA' and ADO1/ZTL, leading to amplification and sharpening of the expression profile of APRR1/TOC1. ADO1/ZTL interacts with ADO3, preventing the interaction of ADO3 with CDF1. This is Adagio protein 1 (ADO1) from Arabidopsis thaliana (Mouse-ear cress).